A 132-amino-acid polypeptide reads, in one-letter code: Rubredoxin-1 (132 aa).

The region spanning 1-53 (MSRYQCPDCQYIYDENKGEPHEGFHPNTSWNDIPKDWACPDCAVRDKVDFIFL) is the Rubredoxin-like domain. Positions 6, 9, 39, and 42 each coordinate Fe cation. Residues 108 to 132 (TEVLDQASTPQVVRKSSTRKKMRNK) form a disordered region. Positions 113–122 (QASTPQVVRK) are enriched in polar residues. Positions 123-132 (SSTRKKMRNK) are enriched in basic residues.

Belongs to the rubredoxin family. The cofactor is Fe(3+).

It is found in the cytoplasm. It participates in hydrocarbon metabolism; alkane degradation. Not known. Probably involved in an electron transport pathway, but not required for the hydrocarbon hydroxylating system. Seems to be non-functional. The polypeptide is Rubredoxin-1 (alkF) (Ectopseudomonas oleovorans (Pseudomonas oleovorans)).